The primary structure comprises 620 residues: Protein regulator of cytokinesis 1 (620 aa).

The required for the interaction with KIF4A stretch occupies residues 1 to 303 (MRRSEVLAEE…IEAIRVELVQ (303 aa)). The interval 1 to 341 (MRRSEVLAEE…QLHDAEIVRL (341 aa)) is dimerization. Coiled coils occupy residues 96–133 (ILQL…ELCE), 211–304 (SLEN…LVQY), and 383–463 (GNLL…TEML). The interval 342-466 (KNYYEVHKEL…QTETEMLYGS (125 aa)) is spectrin-fold. Residues 446–459 (AKQERQLKNKKQTE) show a composition bias toward basic and acidic residues. The disordered stretch occupies residues 446-488 (AKQERQLKNKKQTETEMLYGSAPRTPSKRRGLAPNTPGKARKL). The segment at 467-620 (APRTPSKRRG…GILNSTNIQS (154 aa)) is unstructured, Arg/Lys rich. A phosphothreonine; by CDK1 mark is found at Thr470 and Thr481. Ser513, Arg541, and Ser571 each carry phosphoserine. The disordered stretch occupies residues 517–545 (RLPPSGSKPVAASTCSGKKTPRTGRHGAN). Phosphothreonine is present on Thr578. The disordered stretch occupies residues 600–620 (LSKASKSDATSGILNSTNIQS). Residues 606-620 (SDATSGILNSTNIQS) show a composition bias toward polar residues. The residue at position 616 (Thr616) is a Phosphothreonine; by PLK1.

It belongs to the MAP65/ASE1 family. As to quaternary structure, homodimer. Interacts with the C-terminal Rho-GAP domain and the basic region of RACGAP1. The interaction with RACGAP1 inhibits its GAP activity towards CDC42 in vitro, which may be required for maintaining normal spindle morphology. Interacts (via N-terminus) with the C-terminus of CENPE (via C-terminus); the interaction occurs during late mitosis. Interacts (via N-terminus) with KIF4A (via C-terminus); the interaction is required for the progression of mitosis. Interacts (via N-terminus) with KIF23 (via C-terminus); the interaction occurs during late mitosis. Interacts with KIF14 and KIF20A. Interacts with PLK1. Interacts with KIF20B. Interacts with CCDC66. Phosphorylation by CDK1 in early mitosis holds PRC1 in an inactive monomeric state, during the metaphase to anaphase transition, PRC1 is dephosphorylated, promoting interaction with KIF4A, which then translocates PRC1 along mitotic spindles to the plus ends of antiparallel interdigitating microtubules. Dephosphorylation also promotes MT-bundling activity by allowing dimerization. Phosphorylation by CDK1 prevents PLK1-binding: upon degradation of CDK1 at anaphase and dephosphorylation, it is then phosphorylated by PLK1, leading to cytokinesis. Overexpressed in bladder cancer cells.

The protein resides in the nucleus. Its subcellular location is the cytoplasm. It is found in the cytoskeleton. It localises to the spindle pole. The protein localises to the midbody. The protein resides in the chromosome. In terms of biological role, key regulator of cytokinesis that cross-links antiparrallel microtubules at an average distance of 35 nM. Essential for controlling the spatiotemporal formation of the midzone and successful cytokinesis. Required for KIF14 localization to the central spindle and midbody. Required to recruit PLK1 to the spindle. Stimulates PLK1 phosphorylation of RACGAP1 to allow recruitment of ECT2 to the central spindle. Acts as an oncogene for promoting bladder cancer cells proliferation, apoptosis inhibition and carcinogenic progression. This Homo sapiens (Human) protein is Protein regulator of cytokinesis 1.